The chain runs to 702 residues: Polyribonucleotide nucleotidyltransferase (702 aa).

Mg(2+) is bound by residues Asp485 and Asp491. The KH domain maps to 552 to 611 (PKTSTLQIDPEKIRDVIGAGGKVINKIIADTGVKIDIKEDGLVYVSSAESEGVKEAVKII). Positions 621–689 (GEIYLGKVTK…SQGRINLSRK (69 aa)) constitute an S1 motif domain.

This sequence belongs to the polyribonucleotide nucleotidyltransferase family. The cofactor is Mg(2+).

The protein resides in the cytoplasm. The catalysed reaction is RNA(n+1) + phosphate = RNA(n) + a ribonucleoside 5'-diphosphate. Its function is as follows. Involved in mRNA degradation. Catalyzes the phosphorolysis of single-stranded polyribonucleotides processively in the 3'- to 5'-direction. The protein is Polyribonucleotide nucleotidyltransferase of Clostridium perfringens (strain SM101 / Type A).